Consider the following 82-residue polypeptide: Quinohemoprotein amine dehydrogenase subunit gamma (82 aa).

A cross-link (4-cysteinyl-glutamic acid (Cys-Glu)) is located at residues 7-16 (CTTSFDPGWE). Cross-links (3-cysteinyl-aspartic acid (Cys-Asp)) lie at residues 27–33 (CQPMEAD) and 41–49 (CWWPAQVAD). Asp33 serves as the catalytic Proton acceptor. Positions 37-43 (CADPCWW) form a cross-link, 4'-cysteinyl-tryptophylquinone (Cys-Trp). Position 43 is a tryptophylquinone (Trp43).

Belongs to the quinohemoprotein amine dehydrogenase subunit gamma family. In terms of assembly, heterotrimer of an alpha, a beta and a gamma subunit. Requires cysteine tryptophylquinone residue as cofactor. In terms of processing, the cysteine tryptophylquinone (CTQ) is generated by oxidation of the indole ring of a tryptophan residue to form tryptophylquinone, followed by covalent cross-linking with a cysteine residue.

Its subcellular location is the periplasm. The enzyme catalyses 2 Fe(III)-[cytochrome c550] + an aliphatic amine + H2O = 2 Fe(II)-[cytochrome c550] + an aldehyde + NH4(+) + 2 H(+). Inhibited by carbonyl reagents such as hydrazine, hydroxylamine, phenylhydrazine and semicarbazide. Its function is as follows. Catalyzes the oxidative deamination of a wide range of primary aliphatic and aromatic amines. The physiological electron acceptor is the constitutive cytochrome c550. This chain is Quinohemoprotein amine dehydrogenase subunit gamma (qhnDH), found in Paracoccus denitrificans.